Consider the following 342-residue polypeptide: 3-isopropylmalate dehydrogenase (342 aa).

The substrate site is built by R87, R97, R121, and D212. 3 residues coordinate Mg(2+): D212, D236, and D240. Residue 272–284 (GSAPDIAGRQLAD) coordinates NAD(+). Low complexity predominate over residues 319 to 328 (RAAAGAAQPS). The tract at residues 319 to 342 (RAAAGAAQPSTRERGEDLAARAAG) is disordered. A compositionally biased stretch (basic and acidic residues) spans 329–342 (TRERGEDLAARAAG).

It belongs to the isocitrate and isopropylmalate dehydrogenases family. LeuB type 2 subfamily. In terms of assembly, homodimer. Requires Mg(2+) as cofactor. The cofactor is Mn(2+).

The protein resides in the cytoplasm. The catalysed reaction is (2R,3S)-3-isopropylmalate + NAD(+) = 4-methyl-2-oxopentanoate + CO2 + NADH. Its pathway is amino-acid biosynthesis; L-leucine biosynthesis; L-leucine from 3-methyl-2-oxobutanoate: step 3/4. In terms of biological role, catalyzes the oxidation of 3-carboxy-2-hydroxy-4-methylpentanoate (3-isopropylmalate) to 3-carboxy-4-methyl-2-oxopentanoate. The product decarboxylates to 4-methyl-2 oxopentanoate. The polypeptide is 3-isopropylmalate dehydrogenase (Frankia casuarinae (strain DSM 45818 / CECT 9043 / HFP020203 / CcI3)).